The sequence spans 400 residues: Canavanine gamma-lyase (400 aa).

Lysine 213 is modified (N6-(pyridoxal phosphate)lysine).

It belongs to the trans-sulfuration enzymes family. The cofactor is pyridoxal 5'-phosphate.

The enzyme catalyses L-canavanine + H2O = N-hydroxyguanidine + L-homoserine. Its function is as follows. Lyase involved in the degradation of canavanine, the delta-oxa-analog of arginine, allowing growth on canavanine as sole nitrogen and carbon source. Catalyzes the elimination of hydroxyguanidine from canavanine with a subsequent water addition to yield homoserine. Is highly specific for canavanine and cannot use methionine, cystathionine or arginine. The chain is Canavanine gamma-lyase from Pseudomonas canavaninivorans.